Here is a 271-residue protein sequence, read N- to C-terminus: 4-hydroxy-tetrahydrodipicolinate reductase (271 aa).

Residues 10–15, glutamate 36, 100–102, and 124–127 each bind NAD(+); these read GAGGRM, GTT, and SGNM. Histidine 157 functions as the Proton donor/acceptor in the catalytic mechanism. Residue histidine 158 coordinates (S)-2,3,4,5-tetrahydrodipicolinate. Residue lysine 161 is the Proton donor of the active site. 167–168 provides a ligand contact to (S)-2,3,4,5-tetrahydrodipicolinate; the sequence is GT.

The protein belongs to the DapB family.

The protein resides in the cytoplasm. The catalysed reaction is (S)-2,3,4,5-tetrahydrodipicolinate + NAD(+) + H2O = (2S,4S)-4-hydroxy-2,3,4,5-tetrahydrodipicolinate + NADH + H(+). It catalyses the reaction (S)-2,3,4,5-tetrahydrodipicolinate + NADP(+) + H2O = (2S,4S)-4-hydroxy-2,3,4,5-tetrahydrodipicolinate + NADPH + H(+). The protein operates within amino-acid biosynthesis; L-lysine biosynthesis via DAP pathway; (S)-tetrahydrodipicolinate from L-aspartate: step 4/4. Functionally, catalyzes the conversion of 4-hydroxy-tetrahydrodipicolinate (HTPA) to tetrahydrodipicolinate. This chain is 4-hydroxy-tetrahydrodipicolinate reductase, found in Rhodopseudomonas palustris (strain HaA2).